The sequence spans 312 residues: MTRTRSDSLAAGGLNWNSMPLKLFAGGNAKFWDPADIDFSRDRADWESLSNLERDWATRLCAQFIAGEEAVTQDIQPFMAAMRAEGRLGDEMYLTQFAFEEAKHTQVFRMWLDAVGMTDDLQCYLDDLPSYRQMFYEELPASLEALATDPSPAAQVRASATYNHVIEGMMALTGYYAWHRICVDRKVLPGMQELVRRIGDDERRHMAWGTFTCRRHVAADDANWEVFENRMNELIPLALSNTDDSFALYDEIPFGFAKEEFQQYAADKGMRRFGTISSARGRALAEIDVDYSPLQLEDTFAAEDSRVLATSA.

Residues E68, E101, and H104 each contribute to the Mn(2+) site. Positions 71–162 (VTQDIQPFMA…AAQVRASATY (92 aa)) form a cross-link, 3-(O4'-tyrosyl)-valine (Val-Tyr). E101 is a Fe cation binding site. The Fe cation site is built by E167, E202, and H205.

Belongs to the ribonucleoside diphosphate reductase small chain family. R2-like ligand binding oxidase subfamily. In terms of assembly, homodimer. It depends on Fe cation as a cofactor. The cofactor is Mn(2+).

Probable oxidase that might be involved in lipid metabolism. This is R2-like ligand binding oxidase from Mycobacterium sp. (strain KMS).